Reading from the N-terminus, the 579-residue chain is Glypican-3 (579 aa).

The first 24 residues, 1-24, serve as a signal peptide directing secretion; sequence MAGTVRTACLLVAMLLGLGCLGQA. Gln25 is subject to Pyrrolidone carboxylic acid. Intrachain disulfides connect Cys34–Cys71, Cys64–Cys261, Cys72–Cys264, Cys196–Cys348, Cys251–Cys284, Cys273–Cys421, and Cys277–Cys409. N-linked (GlcNAc...) asparagine glycosylation is found at Asn123 and Asn240. The residue at position 351 (Ser351) is a Phosphoserine. N-linked (GlcNAc...) asparagine glycosylation is present at Asn417. O-linked (Xyl...) (glycosaminoglycan) serine glycans are attached at residues Ser494 and Ser508. The tract at residues 533–552 is disordered; it reads DAPGNKQHGNQKDNEITTSH. Ser553 carries the GPI-anchor amidated serine lipid modification. The propeptide at 554 to 579 is removed in mature form; the sequence is VGNMPSPLKILISVAIYVACFFFLVH.

It belongs to the glypican family. In terms of assembly, heterodimer; disulfide-linked. Cleavage by a furin-like convertase results in production of alpha and beta chains which form a disulfide-linked heterodimer. Interacts with DPP4. Interacts with FGF2. Interacts with WNT5A. Also interacts with WNT3A and WNT7B. Interacts with hedgehog protein SHH; the heparan sulfate chains are not required for the interaction. Also interacts with hedgehog protein IHH. Interacts with CD81. Interacts with Wnt receptors FZD4, FZD7 and FZD8; the heparan sulfate chains are required for the interaction. Post-translationally, O-glycosylated; contains heparan sulfate and/or chondroitin sulfate. Cleaved intracellularly by a furin-like convertase to generate 2 subunits, alpha and beta, which remain associated through disulfide bonds and are associated with the cell surface via the GPI-anchor. This processing is essential for its role in inhibition of hedgehog signaling. A second proteolytic event may result in cleavage of the protein on the cell surface, separating it from the GPI-anchor and leading to its shedding from the cell surface. In the developing limb, absent from the apical epidermal ridge at 11 dpc but highly expressed in the underlying mesenchyme. Expression in the mesenchyme at this stage is asymmetric with highest levels in the regions of the distal mesenchyme within the progress zone and within the proximal anterior and posterior limb bud. At later developmental stages including 12.5 and 13.5 dpc, expression is restricted to the interdigital webs and the regions of chondrocytic differentiation of the developing bones. In the embryonic kidney, expressed in both the ureteric bud and mesenchymal cells as early as 13.5 dpc. Expression at 16.5 dpc is similar to that at 13.5 dpc but decreases by 18.5 dpc.

It localises to the cell membrane. Functionally, cell surface proteoglycan. Negatively regulates the hedgehog signaling pathway when attached via the GPI-anchor to the cell surface by competing with the hedgehog receptor PTC1 for binding to hedgehog proteins. Binding to the hedgehog protein SHH triggers internalization of the complex by endocytosis and its subsequent lysosomal degradation. Positively regulates the canonical Wnt signaling pathway by binding to the Wnt receptor Frizzled and stimulating the binding of the Frizzled receptor to Wnt ligands. Positively regulates the non-canonical Wnt signaling pathway. Binds to CD81 which decreases the availability of free CD81 for binding to the transcriptional repressor HHEX, resulting in nuclear translocation of HHEX and transcriptional repression. Inhibits the dipeptidyl peptidase activity of DPP4. Plays a role in limb patterning and skeletal development by controlling the cellular response to BMP4. Modulates the effects of growth factors BMP2, BMP7 and FGF7 on renal branching morphogenesis. Required for coronary vascular development. Plays a role in regulating cell movements during gastrulation. In Mus musculus (Mouse), this protein is Glypican-3 (Gpc3).